An 82-amino-acid polypeptide reads, in one-letter code: Small ribosomal subunit protein bS16 (82 aa).

This sequence belongs to the bacterial ribosomal protein bS16 family.

The chain is Small ribosomal subunit protein bS16 from Sodalis glossinidius (strain morsitans).